Consider the following 842-residue polypeptide: Leucine--tRNA ligase (842 aa).

The short motif at 44-55 is the 'HIGH' region element; it reads PYPSANGLHVGH. The short motif at 619-623 is the 'KMSKS' region element; the sequence is KMSKS. Position 622 (lysine 622) interacts with ATP.

Belongs to the class-I aminoacyl-tRNA synthetase family.

It localises to the cytoplasm. The enzyme catalyses tRNA(Leu) + L-leucine + ATP = L-leucyl-tRNA(Leu) + AMP + diphosphate. This chain is Leucine--tRNA ligase, found in Borrelia duttonii (strain Ly).